The sequence spans 920 residues: Anillin-related medial ring protein mid1 (920 aa).

Positions 1-452 (MKEQEFSYRE…LSSEDLRHPS (452 aa)) are disordered. Residues serine 15 and serine 24 each carry the phosphoserine modification. Threonine 34 carries the post-translational modification Phosphothreonine. Phosphoserine occurs at positions 46 and 62. The Nuclear export sequence (NES) 1 signature appears at 69–81 (LNVATDLLESLDL). Residue serine 95 is modified to Phosphoserine. Residues 461 to 481 (RTYSNYCENEPNKSSQSLVSS) are compositionally biased toward polar residues. The residue at position 531 (serine 531) is a Phosphoserine. A disordered region spans residues 538-561 (DLPSQDKSTSYEVPNGTENQSPRP). The span at 542–561 (QDKSTSYEVPNGTENQSPRP) shows a compositional bias: polar residues. The tract at residues 551-920 (PNGTENQSPR…WLQEYVNFMA (370 aa)) is cryptic lipid-binding C2 domain. The Nuclear localization sequence (NLS) motif lies at 681 to 710 (RKFFDKLFNRRKKRKLNKAAAVENSKAKKS). The Nuclear export sequence (NES) 2 signature appears at 763–773 (LGNLTLTCLYI). The PH domain maps to 802–901 (LYNEGYLYRL…WLQVMNSRSF (100 aa)).

In terms of assembly, homodimer. Interacts with blt1 and cdr2. Interacts with gef2. Interacts with plo1 and rng2. Interacts with fhk2 and sep1. Interacts with clp1. In terms of processing, phosphorylated. At the onset of mitosis, becomes hyperphosphorylated, leaves the nucleus, and forms a medial ring. Phosphorylation by plo1 and other kinases may contribute to solubilizing mid1 for export from the nucleus. Phosphorylation by sid2 drives removal from the cortex at the actomyosin contractile ring constriction onset.

It localises to the nucleus. The protein localises to the cytoplasm. The protein resides in the cell cortex. Its subcellular location is the cytoskeleton. Scaffold protein that anchors the contractile ring (CR) at the cell equator during cytokinesis. At the onset of mitosis, membrane-bound oligomers of mid1 assemble recruitment platforms for cytokinetic ring components at the medial cortex and stabilize the ring position during its compaction. Recruits dephosphorylated myo2, but also rng2, clp1 and cdc15 to nodes and to place cytokinetic nodes around the cell equator the medial cortex to promote the ring assembly in cooperation with F-actin. Necessary to stabilize the mitotic spindle perpendicular to the axis of cell division. Also recruits the cdr2 kinase to the CR. Its function is as follows. In the nucleus, binds to the promoter regions of M-G1 transcribed genes to negatively regulate their expression. The sequence is that of Anillin-related medial ring protein mid1 from Schizosaccharomyces pombe (strain 972 / ATCC 24843) (Fission yeast).